Reading from the N-terminus, the 831-residue chain is Cysteine--tRNA ligase, cytoplasmic (831 aa).

Residue Ala-2 is modified to N-acetylalanine. At Ser-102 the chain carries Phosphoserine. Zn(2+) is bound at residue Cys-138. Gly-139 contributes to the L-cysteine binding site. Residues 140–150 (PTVYDASHMGH) carry the 'HIGH' region motif. Residue Thr-179 coordinates L-cysteine. A 'KIIK' region motif is present at residues 184 to 187 (KIIR). 2 positions are modified to phosphoserine: Ser-388 and Ser-390. Positions 431, 456, and 460 each coordinate Zn(2+). L-cysteine is bound at residue His-456. The 'KMSKS' region motif lies at 489–493 (KMSKS). Residue Lys-492 coordinates ATP. Over residues 736 to 762 (GKKRAEEEKRRKKEEAARKKQEQEAAK) the composition is skewed to basic and acidic residues. Residues 736-766 (GKKRAEEEKRRKKEEAARKKQEQEAAKLAKM) form a disordered region. Phosphoserine is present on Ser-829.

This sequence belongs to the class-I aminoacyl-tRNA synthetase family. In terms of assembly, homodimer. It depends on Zn(2+) as a cofactor.

It localises to the cytoplasm. It carries out the reaction tRNA(Cys) + L-cysteine + ATP = L-cysteinyl-tRNA(Cys) + AMP + diphosphate. Catalyzes the ATP-dependent ligation of cysteine to tRNA(Cys). The protein is Cysteine--tRNA ligase, cytoplasmic (Cars1) of Mus musculus (Mouse).